The chain runs to 201 residues: 3-isopropylmalate dehydratase small subunit (201 aa).

The protein belongs to the LeuD family. LeuD type 1 subfamily. Heterodimer of LeuC and LeuD.

The enzyme catalyses (2R,3S)-3-isopropylmalate = (2S)-2-isopropylmalate. It functions in the pathway amino-acid biosynthesis; L-leucine biosynthesis; L-leucine from 3-methyl-2-oxobutanoate: step 2/4. Catalyzes the isomerization between 2-isopropylmalate and 3-isopropylmalate, via the formation of 2-isopropylmaleate. The sequence is that of 3-isopropylmalate dehydratase small subunit from Cronobacter sakazakii (strain ATCC BAA-894) (Enterobacter sakazakii).